Reading from the N-terminus, the 252-residue chain is Probable transcriptional regulatory protein HNE_0161 (252 aa).

It belongs to the TACO1 family.

The protein localises to the cytoplasm. The sequence is that of Probable transcriptional regulatory protein HNE_0161 from Hyphomonas neptunium (strain ATCC 15444).